The sequence spans 346 residues: Holliday junction branch migration complex subunit RuvB (346 aa).

Residues 1–188 (MSDEYGPPER…FGIVQRLAYY (188 aa)) form a large ATPase domain (RuvB-L) region. ATP-binding positions include leucine 27, arginine 28, glycine 69, lysine 72, threonine 73, threonine 74, 135–137 (EDF), arginine 178, tyrosine 188, and arginine 225. Threonine 73 contributes to the Mg(2+) binding site. Residues 189–259 (PVDELTRIVQ…VAADAMELLD (71 aa)) form a small ATPAse domain (RuvB-S) region. Residues 262-346 (RNGLDEQDRR…QAAGSGDLFG (85 aa)) are head domain (RuvB-H). DNA contacts are provided by arginine 298, arginine 317, and arginine 322.

Belongs to the RuvB family. As to quaternary structure, homohexamer. Forms an RuvA(8)-RuvB(12)-Holliday junction (HJ) complex. HJ DNA is sandwiched between 2 RuvA tetramers; dsDNA enters through RuvA and exits via RuvB. An RuvB hexamer assembles on each DNA strand where it exits the tetramer. Each RuvB hexamer is contacted by two RuvA subunits (via domain III) on 2 adjacent RuvB subunits; this complex drives branch migration. In the full resolvosome a probable DNA-RuvA(4)-RuvB(12)-RuvC(2) complex forms which resolves the HJ.

The protein resides in the cytoplasm. The catalysed reaction is ATP + H2O = ADP + phosphate + H(+). Functionally, the RuvA-RuvB-RuvC complex processes Holliday junction (HJ) DNA during genetic recombination and DNA repair, while the RuvA-RuvB complex plays an important role in the rescue of blocked DNA replication forks via replication fork reversal (RFR). RuvA specifically binds to HJ cruciform DNA, conferring on it an open structure. The RuvB hexamer acts as an ATP-dependent pump, pulling dsDNA into and through the RuvAB complex. RuvB forms 2 homohexamers on either side of HJ DNA bound by 1 or 2 RuvA tetramers; 4 subunits per hexamer contact DNA at a time. Coordinated motions by a converter formed by DNA-disengaged RuvB subunits stimulates ATP hydrolysis and nucleotide exchange. Immobilization of the converter enables RuvB to convert the ATP-contained energy into a lever motion, pulling 2 nucleotides of DNA out of the RuvA tetramer per ATP hydrolyzed, thus driving DNA branch migration. The RuvB motors rotate together with the DNA substrate, which together with the progressing nucleotide cycle form the mechanistic basis for DNA recombination by continuous HJ branch migration. Branch migration allows RuvC to scan DNA until it finds its consensus sequence, where it cleaves and resolves cruciform DNA. This chain is Holliday junction branch migration complex subunit RuvB, found in Halorhodospira halophila (strain DSM 244 / SL1) (Ectothiorhodospira halophila (strain DSM 244 / SL1)).